A 322-amino-acid polypeptide reads, in one-letter code: MEKQYRVLLYYQYVPIEDPETFTAEHLAFCKELGLLGRILISSEGINGTVSGTIEQTDKYMEALKEDPRFASMPIKIDEADGHAFKKMHVRHRNELVNLSLEDDVNPLELTGKHLSPVEFYEQMQSPDTVVIDARNDYEFDVGHFRGAVRPDIETFRELPEWIRDNKEILEGKKILTYCTGGVRCEKFSGWLKREGFEDVSQLDGGIVTYGKDPEVQGKLWDGQCYVFDTRLTVPVNQTEHVVVGKDFFTGEPCERYVNCANPACNRKMIATEESEHKYMRSCSHECRTSERNLYVKQHNLSEEEVQERLAVIEQEQAISQG.

A Rhodanese domain is found at 125-219 (QSPDTVVIDA…YGKDPEVQGK (95 aa)). Catalysis depends on cysteine 179, which acts as the Cysteine persulfide intermediate.

It belongs to the TrhO family.

The enzyme catalyses uridine(34) in tRNA + AH2 + O2 = 5-hydroxyuridine(34) in tRNA + A + H2O. Catalyzes oxygen-dependent 5-hydroxyuridine (ho5U) modification at position 34 in tRNAs. The protein is tRNA uridine(34) hydroxylase of Bacillus pumilus (strain SAFR-032).